The sequence spans 669 residues: Glycerol uptake/efflux facilitator protein (669 aa).

Positions 1–16 are enriched in polar residues; sequence MSNPQKALNDFLSSES. 2 disordered regions span residues 1–99 and 123–147; these read MSNP…TYVP and QDINHKDNGPPSASSNRAFRPRGQT. Over 1-254 the chain is Extracellular; sequence MSNPQKALND…WSSVKNTYLK (254 aa). The span at 50–68 shows a compositional bias: low complexity; it reads NNNNNNNNNNNNSNNNNNG. Over residues 72–81 the composition is skewed to acidic residues; that stretch reads GNDDDYDYEM. 2 stretches are compositionally biased toward polar residues: residues 87 to 99 and 133 to 147; these read SPQSARPTPTYVP and PSASSNRAFRPRGQT. A Phosphoserine modification is found at Ser150. The disordered stretch occupies residues 167 to 215; that stretch reads HTIPESHLSRRRSRSRATSNAGHSANTGATNGRTTGAQTNMESNESPRN. Thr168 carries the phosphothreonine modification. A compositionally biased stretch (low complexity) spans 191–206; that stretch reads ANTGATNGRTTGAQTN. Phosphoserine occurs at positions 209 and 212. A helical membrane pass occupies residues 255–275; sequence EFLAEFMGTMVMIIFGSAVVC. Topologically, residues 276–325 are cytoplasmic; sequence QVNVAGKIQQDNFNVALDNLNVTGSSAETIDAMKSLTSLVSSVAGGTFDD. Residues 326–346 form a helical membrane-spanning segment; the sequence is VALGWAAAVVMGYFCAGGSAI. Residues 347–369 are Extracellular-facing; that stretch reads SGAHLNPSITLANLVYRGFPLKK. Residues 352-354 carry the NPA 1 motif; that stretch reads NPS. Residues 370-390 traverse the membrane as a helical segment; the sequence is VPYYFAGQLIGAFTGALILFI. The Cytoplasmic portion of the chain corresponds to 391 to 446; the sequence is WYKRVLQEAYSDWWMNESVAGMFCVFPKPYLSSGRQFFSEFLCGAMLQAGTFALTD. Residues 447 to 467 traverse the membrane as a helical segment; the sequence is PYTCLSSDVFPLMMFILIFII. The Extracellular segment spans residues 468-506; sequence NASMAYQTGTAMNLARDLGPRLALYAVGFDHKMLWVHHH. The short motif at 480 to 482 is the NPA 2 element; that stretch reads NLA. The helical transmembrane segment at 507–527 threads the bilayer; sequence HFFWVPMVGPFIGALMGGLVY. The Cytoplasmic portion of the chain corresponds to 528 to 669; it reads DVCIYQGHES…SHYGNAKKVT (142 aa). 2 disordered regions span residues 591 to 615 and 635 to 669; these read LQKTKTKSSISDNENEAGEKKVQFK and DSIETASLGATTTDSIGLSDTSSEDSHYGNAKKVT. The span at 638-655 shows a compositional bias: polar residues; it reads ETASLGATTTDSIGLSDT.

Belongs to the MIP/aquaporin (TC 1.A.8) family.

It localises to the membrane. Functionally, channel protein for glycerol. Has a role in both glycerol influx and efflux. Plays a role in osmoregulation: under osmotic stress the channel is apparently closed to allow accumulation of glycerol in the cell under hyperosmotic conditions. The sequence is that of Glycerol uptake/efflux facilitator protein (FPS1) from Saccharomyces cerevisiae (strain ATCC 204508 / S288c) (Baker's yeast).